Consider the following 180-residue polypeptide: MAEQVTEATASGVFCSRILNMVNTGDVNAIILAQRHMLDRFEKTNEMLLNFNGLSNVRLQQMSDRFAHHTRTLVEMKKDLDIIFRRIRMLKGKLAKQYPESFNNVHESPILEDDDDFDPTLKSAATTIATSEQSTESCDTSPSIISPAMSQDFEDLSQAPSDTPSVNGQILTDEELVHED.

Composition is skewed to polar residues over residues 130–144 and 158–170; these read TSEQ…SPSI and QAPS…NGQI. Residues 130–180 form a disordered region; the sequence is TSEQSTESCDTSPSIISPAMSQDFEDLSQAPSDTPSVNGQILTDEELVHED.

The protein belongs to the KXD1 family. As to quaternary structure, associates with the BLOC-1 complex.

It localises to the lysosome membrane. Functionally, as part of a BORC-like complex may play a role in lysosomes movement and localization at the cell periphery. Associated with the cytosolic face of lysosomes, this complex may couple lysosomes to microtubule plus-end-directed kinesin motor. May also be involved in the biogenesis of lysosome-related organelles such as melanosomes. In Xenopus laevis (African clawed frog), this protein is KxDL motif-containing protein 1 (kxd1).